The primary structure comprises 115 residues: Cyclin-dependent kinase 2-associated protein 1 (115 aa).

The tract at residues 20–25 (GSVHSP) is interaction with CDK2AP2. Serine 46 is subject to Phosphoserine; by IKKE.

The protein belongs to the CDK2AP family. Homodimer. Component of the nucleosome remodeling and deacetylase (NuRD) repressor complex, composed of core proteins MTA1, MTA2, MTA3, RBBP4, RBBP7, HDAC1, HDAC2, MBD2, MBD3, and peripherally associated proteins CDK2AP1, CDK2AP2, GATAD2A, GATAD2B, CHD3, CHD4 and CHD5. The exact stoichiometry of the NuRD complex is unknown, and some subunits such as MBD2 and MBD3, GATAD2A and GATAD2B, and CHD3, CHD4 and CHD5 define mutually exclusive NuRD complexes. Interacts with monomeric unphosphorylated CDK2. Interacts with CDK2AP2. Interacts with GATAD2A. Interacts with HDAC1. Interacts with HDAC2. Interacts with MBD2. Interacts with MBD3. Interacts with RBBP4. Interacts with RBBP7. In terms of processing, phosphorylated in vitro by IKBKE at Ser-46.

It localises to the nucleus. Its subcellular location is the chromosome. In terms of biological role, inhibitor of cyclin-dependent kinase CDK2. Also acts as a component of the histone deacetylase NuRD complex which participates in the remodeling of chromatin. The polypeptide is Cyclin-dependent kinase 2-associated protein 1 (CDK2AP1) (Homo sapiens (Human)).